The chain runs to 121 residues: Surface glycoprotein CD59 homolog (121 aa).

The N-terminal stretch at 1–19 is a signal peptide; sequence MYILFTLVLTFVFCKPIHS. Residues 20–104 form the UPAR/Ly6 domain; that stretch reads LQCYNCSHST…ENIKRTISDK (85 aa). Disulfide bonds link Cys-22–Cys-45, Cys-25–Cys-32, Cys-38–Cys-58, Cys-64–Cys-82, and Cys-83–Cys-88. An N-linked (GlcNAc...) asparagine; by host glycan is attached at Asn-24. Asn-96 is lipidated: GPI-anchor amidated asparagine; by host. A propeptide spans 97 to 121 (removed in mature form); it reads IKRTISDKALLLLALFLVTAWNFPL.

The protein localises to the host cell membrane. This chain is Surface glycoprotein CD59 homolog (15), found in Saimiriine herpesvirus 2 (strain 11) (SaHV-2).